Here is a 270-residue protein sequence, read N- to C-terminus: MGQKVNPHGFRLGVTTDFKSRWFADKLYKDYVKEDVAIRQMLTRGMERAGISKVEIERTRERVRVDVHTARPGIVIGRRGAEADRIRANLEKLTNKQVQLNILEVKNPEIDAQLVAQGVAEQLSSRVAFRRAMRKAIQSAMKSGAKGIRVQCSGRLGGAEMSRSEFYREGRVPLHTLRADIDYGFFEARTTFGRIGVKVWIYKGEAPMTRAEREAAQAAQRAAGPQRRERPGRRRRGGGGGGGQQQQQAEKATAQATEAAKAAKSGNEGS.

The region spanning 38-106 (IRQMLTRGME…QVQLNILEVK (69 aa)) is the KH type-2 domain. The interval 212–270 (EREAAQAAQRAAGPQRRERPGRRRRGGGGGGGQQQQQAEKATAQATEAAKAAKSGNEGS) is disordered. Low complexity-rich tracts occupy residues 216-225 (AQAAQRAAGP) and 245-263 (QQQQAEKATAQATEAAKAA).

The protein belongs to the universal ribosomal protein uS3 family. Part of the 30S ribosomal subunit. Forms a tight complex with proteins S10 and S14.

Functionally, binds the lower part of the 30S subunit head. Binds mRNA in the 70S ribosome, positioning it for translation. The chain is Small ribosomal subunit protein uS3 from Thermobifida fusca (strain YX).